The primary structure comprises 215 residues: MIYDWVFAVHEHVAFTAFDTETTGLKAEEDRIIEIGAVTFDRKGIIARFSTLIFPDRAIPPDVSKINHITDDMLVNKPRFCEIVSDFSRFIKGTVLVAHNANFDVEFLNAELSLCKKQPLSHKVVDTYAMAQAVFPGLGRHQYRLQNLALQFGLTVHAAHRAEDDARVCMELFTTMIAHHAKQNGHCVNHAQSPTIKKLIQEIQASSTDCSQELF.

Asp-19 and Glu-21 together coordinate a divalent metal cation. Positions 19, 21, 62, and 67 each coordinate substrate. His-160 acts as the Proton acceptor in catalysis. Asp-165 contacts a divalent metal cation. Asp-165 contributes to the substrate binding site.

In terms of assembly, DNA polymerase III contains a core (composed of alpha, epsilon and theta chains) that associates with a tau subunit. This core dimerizes to form the POLIII' complex. PolIII' associates with the gamma complex (composed of gamma, delta, delta', psi and chi chains) and with the beta chain to form the complete DNA polymerase III complex. Requires Mg(2+) as cofactor. Mn(2+) serves as cofactor.

It catalyses the reaction DNA(n) + a 2'-deoxyribonucleoside 5'-triphosphate = DNA(n+1) + diphosphate. Functionally, DNA polymerase III is a complex, multichain enzyme responsible for most of the replicative synthesis in bacteria. The epsilon subunit contain the editing function and is a proofreading 3'-5' exonuclease. The chain is DNA polymerase III subunit epsilon (dnaQ) from Treponema pallidum (strain Nichols).